A 77-amino-acid polypeptide reads, in one-letter code: Translation initiation factor IF-1, chloroplastic (77 aa).

The 71-residue stretch at 1–71 (MKEQKWVHEG…TRGRIIYRLR (71 aa)) folds into the S1-like domain.

Belongs to the IF-1 family. As to quaternary structure, component of the 30S ribosomal translation pre-initiation complex which assembles on the 30S ribosome in the order IF-2 and IF-3, IF-1 and N-formylmethionyl-tRNA(fMet); mRNA recruitment can occur at any time during PIC assembly.

It is found in the plastid. Its subcellular location is the chloroplast. Its function is as follows. One of the essential components for the initiation of protein synthesis. Stabilizes the binding of IF-2 and IF-3 on the 30S subunit to which N-formylmethionyl-tRNA(fMet) subsequently binds. Helps modulate mRNA selection, yielding the 30S pre-initiation complex (PIC). Upon addition of the 50S ribosomal subunit IF-1, IF-2 and IF-3 are released leaving the mature 70S translation initiation complex. The protein is Translation initiation factor IF-1, chloroplastic of Cercidiphyllum japonicum (Katsura tree).